The chain runs to 357 residues: Tribbles homolog 3 (357 aa).

Residues 1 to 63 (MRASPLAVPA…PAPVHAPDVT (63 aa)) are disordered. The segment at 1–127 (MRASPLAVPA…GHVARPAEVL (127 aa)) is interaction with DDIT3/CHOP. A Protein kinase domain is found at 68-316 (LGPYVLLEPE…SGILLHPWLR (249 aa)). Residues 333 to 357 (DQVVPEGPGLEEAEEEGERDMGLYG) are disordered. The span at 341-350 (GLEEAEEEGE) shows a compositional bias: acidic residues.

This sequence belongs to the protein kinase superfamily. CAMK Ser/Thr protein kinase family. Tribbles subfamily. As to quaternary structure, interacts with AKT1, AKT2, MAP2K1 and MAP2K7. Interacts with ATF4. Interacts with DDIT3/CHOP and inhibits its interaction with EP300/P300. Interacts with APOBEC3C. Interacts (via N-terminus) with APOBEC3A. Interacts with RELA.

It is found in the nucleus. Its function is as follows. Inactive protein kinase which acts as a regulator of the integrated stress response (ISR), a process for adaptation to various stress. Inhibits the transcriptional activity of DDIT3/CHOP and is involved in DDIT3/CHOP-dependent cell death during ER stress. May play a role in programmed neuronal cell death but does not appear to affect non-neuronal cells. Acts as a negative feedback regulator of the ATF4-dependent transcription during the ISR: while TRIB3 expression is promoted by ATF4, TRIB3 protein interacts with ATF4 and inhibits ATF4 transcription activity. Disrupts insulin signaling by binding directly to Akt kinases and blocking their activation. May bind directly to and mask the 'Thr-308' phosphorylation site in AKT1. Interacts with the NF-kappa-B transactivator p65 RELA and inhibits its phosphorylation and thus its transcriptional activation activity. Interacts with MAPK kinases and regulates activation of MAP kinases. Can inhibit APOBEC3A editing of nuclear DNA. The polypeptide is Tribbles homolog 3 (TRIB3) (Bos taurus (Bovine)).